The primary structure comprises 495 residues: Protein YhjJ (495 aa).

The N-terminal stretch at 1-24 is a signal peptide; that stretch reads MQGTKIRLLAGSLLMLASAGYVQA.

The protein belongs to the peptidase M16 family.

It is found in the periplasm. The sequence is that of Protein YhjJ (yhjJ) from Salmonella typhi.